A 342-amino-acid chain; its full sequence is Autoinducer 2 import system permease protein LsrC (342 aa).

Residues 1 to 13 (MLKFIQNNREITA) lie on the Periplasmic side of the membrane. Residues 14–34 (LLAVVLLFVLPGFLDRQYLSV) traverse the membrane as a helical segment. Residues 35–38 (QTLT) lie on the Cytoplasmic side of the membrane. The chain crosses the membrane as a helical span at residues 39 to 59 (MVYSSAQILILLAMGATLVML). The Periplasmic segment spans residues 60–69 (TRNIDVSVGS). Residues 70 to 90 (ITGMCAVLLGMLLNAGYSLPV) traverse the membrane as a helical segment. Over 91 to 92 (AC) the chain is Cytoplasmic. Residues 93–113 (VATLLLGLLAGFFNGVLVAWL) form a helical membrane-spanning segment. Residue Lys-114 is a topological domain, periplasmic. The helical transmembrane segment at 115–135 (IPAIVATLGTLGLYRGIMLLW) threads the bilayer. The Cytoplasmic segment spans residues 136-154 (TGGKWIEGLPAELKQLSAP). A helical membrane pass occupies residues 155 to 175 (LLFGVSAIGWLTIILVAFMAW). Residues 176–212 (LLAKTAFGRSFYVTGDNLQGARQLGVRTEAIRIVAFS) are Periplasmic-facing. Residues 213-233 (LNGCMAALAGIVFASQIGFIP) traverse the membrane as a helical segment. At 234 to 251 (NQTGTGLEMKAIAACVLG) the chain is on the cytoplasmic side. A helical membrane pass occupies residues 252-272 (GISLLGGSGAIIGAVLGAWFL). At 273 to 283 (TQIDSVLVLLR) the chain is on the periplasmic side. The chain crosses the membrane as a helical span at residues 284-304 (IPAWWNDFIAGMVLLAVLVFD). The Cytoplasmic segment spans residues 305–342 (GRLRCALERNLRRQKYARFMMPPPPVKPASSGKKREAA).

It belongs to the binding-protein-dependent transport system permease family. AraH/RbsC subfamily. As to quaternary structure, the complex is composed of two ATP-binding proteins (LsrA), two transmembrane proteins (LsrC and LsrD) and a solute-binding protein (LsrB).

It localises to the cell inner membrane. Functionally, part of the ABC transporter complex LsrABCD involved in autoinducer 2 (AI-2) import. Probably responsible for the translocation of the substrate across the membrane. The protein is Autoinducer 2 import system permease protein LsrC (lsrC) of Escherichia coli (strain SMS-3-5 / SECEC).